We begin with the raw amino-acid sequence, 385 residues long: Succinyl-diaminopimelate desuccinylase (385 aa).

Position 73 (histidine 73) interacts with Zn(2+). The active site involves aspartate 75. Aspartate 106 provides a ligand contact to Zn(2+). Catalysis depends on glutamate 141, which acts as the Proton acceptor. 3 residues coordinate Zn(2+): glutamate 142, glutamate 170, and histidine 359.

This sequence belongs to the peptidase M20A family. DapE subfamily. Homodimer. Requires Zn(2+) as cofactor. Co(2+) serves as cofactor.

The catalysed reaction is N-succinyl-(2S,6S)-2,6-diaminopimelate + H2O = (2S,6S)-2,6-diaminopimelate + succinate. The protein operates within amino-acid biosynthesis; L-lysine biosynthesis via DAP pathway; LL-2,6-diaminopimelate from (S)-tetrahydrodipicolinate (succinylase route): step 3/3. Functionally, catalyzes the hydrolysis of N-succinyl-L,L-diaminopimelic acid (SDAP), forming succinate and LL-2,6-diaminopimelate (DAP), an intermediate involved in the bacterial biosynthesis of lysine and meso-diaminopimelic acid, an essential component of bacterial cell walls. This Methylorubrum extorquens (strain CM4 / NCIMB 13688) (Methylobacterium extorquens) protein is Succinyl-diaminopimelate desuccinylase.